The primary structure comprises 473 residues: UDP-N-acetylmuramate--L-alanine ligase (473 aa).

ATP is bound at residue 123–129; sequence GSHGKTS.

Belongs to the MurCDEF family.

The protein localises to the cytoplasm. It catalyses the reaction UDP-N-acetyl-alpha-D-muramate + L-alanine + ATP = UDP-N-acetyl-alpha-D-muramoyl-L-alanine + ADP + phosphate + H(+). It functions in the pathway cell wall biogenesis; peptidoglycan biosynthesis. In terms of biological role, cell wall formation. The sequence is that of UDP-N-acetylmuramate--L-alanine ligase from Prochlorococcus marinus subsp. pastoris (strain CCMP1986 / NIES-2087 / MED4).